A 156-amino-acid polypeptide reads, in one-letter code: MTHPLIPDLLHLAIPIAENLGLEVVDIVFQTNKRPPVLRVDIRNLAGDTGLEDCEQMSRALETALDSQEILPGAYVLEISSPGISRQLSSEREFQSFKGFPVIVTGQDSQGKPQEWRGKLQGRDEQSIYLNQKGRSLTIDRTTVISVRLDERRSNQ.

This sequence belongs to the RimP family.

It localises to the cytoplasm. Functionally, required for maturation of 30S ribosomal subunits. The sequence is that of Ribosome maturation factor RimP from Microcystis aeruginosa (strain NIES-843 / IAM M-2473).